The primary structure comprises 189 residues: GTPase NRas (189 aa).

Residue 10-17 (GAGGVGKS) coordinates GTP. An Effector region motif is present at residues 32–40 (YDPTIEDSY). Residues 57–61 (DTAGQ) and 116–119 (NKCD) each bind GTP. A hypervariable region region spans residues 166–185 (YRMKKLDSSEDNNQGCIRIP). The S-palmitoyl cysteine moiety is linked to residue Cys181. Cys186 carries the S-farnesyl cysteine lipid modification. The propeptide at 187 to 189 (KLM) is removed in mature form.

This sequence belongs to the small GTPase superfamily. Ras family. Palmitoylated by the ZDHHC9-GOLGA7 complex. Depalmitoylated by abhd17a, abhd17b and abhd17c. A continuous cycle of de- and re-palmitoylation regulates rapid exchange between plasma membrane and Golgi.

It localises to the cell membrane. Its subcellular location is the golgi apparatus membrane. The catalysed reaction is GTP + H2O = GDP + phosphate + H(+). Alternates between an inactive form bound to GDP and an active form bound to GTP. Activated by a guanine nucleotide-exchange factor (GEF) and inactivated by a GTPase-activating protein (GAP). Functionally, ras proteins bind GDP/GTP and possess intrinsic GTPase activity. The polypeptide is GTPase NRas (nras) (Xenopus laevis (African clawed frog)).